The sequence spans 386 residues: Succinate--CoA ligase [ADP-forming] subunit beta (386 aa).

The ATP-grasp domain occupies 9–244 (KEILHKFNVP…YDEEVKEEIE (236 aa)). Residues Lys46, 53-55 (GRG), Glu99, Ser102, and Glu107 each bind ATP. Positions 199 and 213 each coordinate Mg(2+). Substrate contacts are provided by residues Asn264 and 321–323 (GIM).

Belongs to the succinate/malate CoA ligase beta subunit family. In terms of assembly, heterotetramer of two alpha and two beta subunits. Mg(2+) is required as a cofactor.

The catalysed reaction is succinate + ATP + CoA = succinyl-CoA + ADP + phosphate. The enzyme catalyses GTP + succinate + CoA = succinyl-CoA + GDP + phosphate. Its pathway is carbohydrate metabolism; tricarboxylic acid cycle; succinate from succinyl-CoA (ligase route): step 1/1. In terms of biological role, succinyl-CoA synthetase functions in the citric acid cycle (TCA), coupling the hydrolysis of succinyl-CoA to the synthesis of either ATP or GTP and thus represents the only step of substrate-level phosphorylation in the TCA. The beta subunit provides nucleotide specificity of the enzyme and binds the substrate succinate, while the binding sites for coenzyme A and phosphate are found in the alpha subunit. The polypeptide is Succinate--CoA ligase [ADP-forming] subunit beta (Wolbachia pipientis subsp. Culex pipiens (strain wPip)).